Here is a 1081-residue protein sequence, read N- to C-terminus: Carbamoyl phosphate synthase large chain (1081 aa).

Residues 1-403 (MPRRNDLNKI…SFQKALRSLE (403 aa)) are carboxyphosphate synthetic domain. 11 residues coordinate ATP: Arg-129, Arg-170, Gly-177, Lys-209, Leu-211, Glu-216, Gly-242, Val-243, His-244, Gln-286, and Glu-300. An ATP-grasp 1 domain is found at 133-329 (KEAMARIGVP…IAKFAAKLAV (197 aa)). Residues Gln-286, Glu-300, and Asn-302 each coordinate Mg(2+). Mn(2+) contacts are provided by Gln-286, Glu-300, and Asn-302. The tract at residues 404 to 553 (TGRFGFGCDR…STYEPEECEV (150 aa)) is oligomerization domain. Residues 554–944 (LPSDKPKVMI…AFAKAELGAG (391 aa)) are carbamoyl phosphate synthetic domain. The ATP-grasp 2 domain maps to 686 to 878 (EKILHELEIS…LAKIASLVMS (193 aa)). The ATP site is built by Arg-722, Lys-761, Leu-763, Glu-768, Gly-794, Ile-795, His-796, Ser-797, Gln-837, and Glu-849. 3 residues coordinate Mg(2+): Gln-837, Glu-849, and Asn-851. Mn(2+) contacts are provided by Gln-837, Glu-849, and Asn-851. Residues 945-1081 (VILATTGTVF…DVKALQDYLG (137 aa)) form the MGS-like domain. Residues 945-1081 (VILATTGTVF…DVKALQDYLG (137 aa)) form an allosteric domain region.

This sequence belongs to the CarB family. As to quaternary structure, composed of two chains; the small (or glutamine) chain promotes the hydrolysis of glutamine to ammonia, which is used by the large (or ammonia) chain to synthesize carbamoyl phosphate. Tetramer of heterodimers (alpha,beta)4. Mg(2+) serves as cofactor. Mn(2+) is required as a cofactor.

The enzyme catalyses hydrogencarbonate + L-glutamine + 2 ATP + H2O = carbamoyl phosphate + L-glutamate + 2 ADP + phosphate + 2 H(+). It carries out the reaction hydrogencarbonate + NH4(+) + 2 ATP = carbamoyl phosphate + 2 ADP + phosphate + 2 H(+). Its pathway is amino-acid biosynthesis; L-arginine biosynthesis; carbamoyl phosphate from bicarbonate: step 1/1. The protein operates within pyrimidine metabolism; UMP biosynthesis via de novo pathway; (S)-dihydroorotate from bicarbonate: step 1/3. Functionally, large subunit of the glutamine-dependent carbamoyl phosphate synthetase (CPSase). CPSase catalyzes the formation of carbamoyl phosphate from the ammonia moiety of glutamine, carbonate, and phosphate donated by ATP, constituting the first step of 2 biosynthetic pathways, one leading to arginine and/or urea and the other to pyrimidine nucleotides. The large subunit (synthetase) binds the substrates ammonia (free or transferred from glutamine from the small subunit), hydrogencarbonate and ATP and carries out an ATP-coupled ligase reaction, activating hydrogencarbonate by forming carboxy phosphate which reacts with ammonia to form carbamoyl phosphate. This chain is Carbamoyl phosphate synthase large chain, found in Synechocystis sp. (strain ATCC 27184 / PCC 6803 / Kazusa).